The primary structure comprises 214 residues: uncharacterized protein (214 aa).

An N-terminal signal peptide occupies residues 1–18; it reads MTMYIGLILVVLATFCQG. N-linked (GlcNAc...) asparagine; by host glycosylation occurs at Asn64.

This is an uncharacterized protein from Magallana gigas (Pacific oyster).